Consider the following 445-residue polypeptide: Phosphoglucosamine mutase (445 aa).

The active-site Phosphoserine intermediate is the S102. Residues S102, D241, D243, and D245 each coordinate Mg(2+). The residue at position 102 (S102) is a Phosphoserine.

Belongs to the phosphohexose mutase family. The cofactor is Mg(2+). In terms of processing, activated by phosphorylation.

It carries out the reaction alpha-D-glucosamine 1-phosphate = D-glucosamine 6-phosphate. Catalyzes the conversion of glucosamine-6-phosphate to glucosamine-1-phosphate. The chain is Phosphoglucosamine mutase from Klebsiella pneumoniae (strain 342).